A 205-amino-acid polypeptide reads, in one-letter code: Ribosome maturation factor RimP (205 aa).

Residues 1–13 (MSNAEATTSSDRT) are compositionally biased toward polar residues. The interval 1-27 (MSNAEATTSSDRTGTGKAEAESVHNPE) is disordered. Basic and acidic residues predominate over residues 18-27 (AEAESVHNPE).

This sequence belongs to the RimP family.

Its subcellular location is the cytoplasm. In terms of biological role, required for maturation of 30S ribosomal subunits. This chain is Ribosome maturation factor RimP, found in Arthrobacter sp. (strain FB24).